The primary structure comprises 277 residues: MLLLLAITAVVSATMVHPSAVVPQPAAPLHVVPPQQQMGMVNGCTSKKLEGAEIMRRNMIECQKRSSEATKAMIERANEKAVESFNKEVSKGPSQKDGGQCIEKAVQGTDRCILAGIIDKAVNKRKYRISDVENSTSLYRGDKLIALIVNVDYGLQPITKPKKKKSKIMANLPQPKREMYFNQIGQLVGARGTFPQENKEDCKPCEGPKKTVETTSEKCNLGCELKGTSALISKAIQKKEVKDTKEGEKSASQDSDGEGTAEDAEVQQPSADGEGLE.

The signal sequence occupies residues 1-18 (MLLLLAITAVVSATMVHP). Residue Asn134 is glycosylated (N-linked (GlcNAc...) asparagine). The segment covering 237-251 (QKKEVKDTKEGEKSA) has biased composition (basic and acidic residues). The disordered stretch occupies residues 237–277 (QKKEVKDTKEGEKSASQDSDGEGTAEDAEVQQPSADGEGLE). The segment covering 255–265 (SDGEGTAEDAE) has biased composition (acidic residues).

Interacts with PTP1 and PTP3.

It localises to the spore polar tube. In terms of biological role, involved in formation of a polar tube through which the infectious agent is passed on to the host cell. In Encephalitozoon cuniculi (strain GB-M1) (Microsporidian parasite), this protein is Polar tube protein 2 (PTP2).